We begin with the raw amino-acid sequence, 366 residues long: Aldo-keto reductase AFTS1 (366 aa).

Asp-75 serves as a coordination point for NADP(+). Residue Tyr-80 is the Proton donor of the active site. His-172 is a binding site for substrate. NADP(+)-binding positions include 202–203 (SS), Gln-228, 257–267 (GSLASGRLARP), and 329–337 (SSVERIDEA).

The protein belongs to the aldo/keto reductase family.

Its pathway is mycotoxin biosynthesis. In terms of biological role, aldo-keto reductase; part of the gene clusters that mediate the biosynthesis of the host-selective toxins (HSTs) AF-toxins responsible for Alternaria black spot of strawberry disease by the strawberry pathotype. AF-toxin I and III are valine derivatives of 2,3-dyhydroxy-isovaleric acid and 2-hydroxy-isovaleric acid respectively, while AF II is an isoleucine derivative of 2-hydroxy-valeric acid. These derivatives are bound to a 9,10-epoxy-8-hydroxy-9-methyl-decatrienoic acid (EDA) moiety. On cellular level, AF-toxins affect plasma membrane of susceptible cells and cause a sudden increase in loss of K(+) after a few minutes of toxin treatment. The aldo-keto reductase AFTS1 catalyzes the conversion of 2-keto-isovaleric acid (2-KIV) to 2-hydroxy-isovaleric acid (2-HIV) by reduction of its ketone to an alcohol. The acyl-CoA ligase AFT1, the hydrolase AFT2 and the enoyl-CoA hydratases AFT3 and AFT6, but also the polyketide synthase AFT9, the acyl-CoA dehydrogenase AFT10, the cytochrome P450 monooxygenase AFT11 and the oxidoreductase AFT12 are all involved in the biosynthesis of the AK-, AF- and ACT-toxin common EDA structural moiety. The exact function of each enzyme, and of additional enzymes identified within the AF-toxin clusters have still to be determined. The protein is Aldo-keto reductase AFTS1 of Alternaria alternata (Alternaria rot fungus).